Reading from the N-terminus, the 602-residue chain is Elongation factor 4 (602 aa).

Positions 7 to 189 constitute a tr-type G domain; the sequence is KYIRNFSIVA…AIVNKVPAPD (183 aa). GTP contacts are provided by residues 19–24 and 136–139; these read DHGKST and NKID.

It belongs to the TRAFAC class translation factor GTPase superfamily. Classic translation factor GTPase family. LepA subfamily.

It is found in the cell membrane. The enzyme catalyses GTP + H2O = GDP + phosphate + H(+). Required for accurate and efficient protein synthesis under certain stress conditions. May act as a fidelity factor of the translation reaction, by catalyzing a one-codon backward translocation of tRNAs on improperly translocated ribosomes. Back-translocation proceeds from a post-translocation (POST) complex to a pre-translocation (PRE) complex, thus giving elongation factor G a second chance to translocate the tRNAs correctly. Binds to ribosomes in a GTP-dependent manner. This Clostridium botulinum (strain Kyoto / Type A2) protein is Elongation factor 4.